The chain runs to 451 residues: Interferon regulatory factor 4 (451 aa).

Positions 21–129 (NGKLRQWLID…DPYKVYRIVP (109 aa)) form a DNA-binding region, IRF tryptophan pentad repeat. A phosphoserine; by ROCK2 mark is found at Ser447 and Ser448.

The protein belongs to the IRF family. In terms of assembly, interacts with the BATF-JUNB heterodimer. Interacts with BATF (via bZIP domain); the interaction is direct. Interacts with SPIB. Interacts with DEF6. Directly interacts with NLRP3 in the nucleus of Th2 cells; this interaction enhances IRF4 ability to bind to the IL4 promoter and is required for optimal IRF4-dependent IL4 transcription. Interacts with SPI1. In terms of processing, phosphorylation by ROCK2 regulates IL-17 and IL-21 production. Lymphoid cells.

It is found in the nucleus. The protein localises to the cytoplasm. Its function is as follows. Transcriptional activator. Binds to the interferon-stimulated response element (ISRE) of the MHC class I promoter. Binds the immunoglobulin lambda light chain enhancer, together with PU.1. Probably plays a role in ISRE-targeted signal transduction mechanisms specific to lymphoid cells. Involved in CD8(+) dendritic cell differentiation by forming a complex with the BATF-JUNB heterodimer in immune cells, leading to recognition of AICE sequence (5'-TGAnTCA/GAAA-3'), an immune-specific regulatory element, followed by cooperative binding of BATF and IRF4 and activation of genes. This is Interferon regulatory factor 4 from Homo sapiens (Human).